The chain runs to 198 residues: MQRRIGLTGGIASGKSSVGRLLEARGWPVLDADQYARDALAPNTAASQAVAHHFGAAVGTAADLDRKALGRIVFSDPDQRRWLEALIHPVVRERFQHELAELRDEPVVVLMIPLLFEAGLDVLCSEIWLVDCTPKQQLERMIQRDGLTKNEAQNRLQAQWPIARKRDRADCVIDNSGGVNDLLAAVSRCGLRADGTTW.

Residues 4–198 (RIGLTGGIAS…CGLRADGTTW (195 aa)) enclose the DPCK domain. 12–17 (ASGKSS) lines the ATP pocket.

Belongs to the CoaE family.

It localises to the cytoplasm. The enzyme catalyses 3'-dephospho-CoA + ATP = ADP + CoA + H(+). It participates in cofactor biosynthesis; coenzyme A biosynthesis; CoA from (R)-pantothenate: step 5/5. In terms of biological role, catalyzes the phosphorylation of the 3'-hydroxyl group of dephosphocoenzyme A to form coenzyme A. This is Dephospho-CoA kinase from Parasynechococcus marenigrum (strain WH8102).